The chain runs to 560 residues: Mitochondria-eating protein (560 aa).

An interaction with YWHAG/14-3-3 protein gamma region spans residues 1–294 (MADNLRKLVS…SHSRNHSRSR (294 aa)). Phosphoserine is present on residues S13, S85, S156, and S159. Coiled-coil stretches lie at residues 118-186 (DRNI…SRHR) and 223-248 (DYEKQLRTLKDEIAVLSAEKSVLQGR). 2 disordered regions span residues 178–217 (QAQEESRHRPPEHRSSEKRGSERRRVEPRGADRCGAAQRK) and 243–316 (SVLQ…AKLS). Basic and acidic residues predominate over residues 181–209 (EESRHRPPEHRSSEKRGSERRRVEPRGAD). The segment covering 248 to 262 (RSTRSRSPSPASCSR) has biased composition (low complexity). Basic residues predominate over residues 263–293 (SRSHSHSRSRSHSHSRSGSHSRSHSRNHSRS). Polar residues predominate over residues 300–310 (TAVSGVRSPSP). Phosphoserine is present on residues S307, S309, and S531.

The protein belongs to the MIEAP family. In terms of assembly, interacts (via coiled-coil domains) with BNIP3L (via BH3 domain). Interacts (via coiled-coil domains) with BNIP3 (via BH3 domain). Interacts with YWHAG/14-3-3 protein gamma; a protein that also plays a role in MALM.

The protein resides in the cytoplasm. It is found in the cytosol. The protein localises to the mitochondrion outer membrane. Its subcellular location is the mitochondrion matrix. In terms of biological role, key regulator of mitochondrial quality that mediates the repairing or degradation of unhealthy mitochondria in response to mitochondrial damage. Mediator of mitochondrial protein catabolic process (also named MALM) by mediating the degradation of damaged proteins inside mitochondria by promoting the accumulation in the mitochondrial matrix of hydrolases that are characteristic of the lysosomal lumen. Also involved in mitochondrion degradation of damaged mitochondria by promoting the formation of vacuole-like structures (named MIV), which engulf and degrade unhealthy mitochondria by accumulating lysosomes. The physical interaction of SPATA18/MIEAP, BNIP3 and BNIP3L/NIX at the mitochondrial outer membrane regulates the opening of a pore in the mitochondrial double membrane in order to mediate the translocation of lysosomal proteins from the cytoplasm to the mitochondrial matrix. Binds cardiolipin. May form molecular condensates (non-membrane-bounded organelles) within mitochondria that compartmentalize and promote cardiolipin metabolism. This is Mitochondria-eating protein (SPATA18) from Sus scrofa (Pig).